A 451-amino-acid chain; its full sequence is Adenylyltransferase and sulfurtransferase MOCS3-2 (451 aa).

The disordered stretch occupies residues 42–62 (GEDSDEAEESSNDMPTPQTKL). A compositionally biased stretch (acidic residues) spans 43-52 (EDSDEAEESS). A Phosphothreonine modification is found at Thr60. ATP contacts are provided by residues Gly99, Asp120, 127 to 131 (SNLHR), Lys144, and 188 to 189 (DN). Zn(2+) contacts are provided by Cys229 and Cys232. The active-site Glycyl thioester intermediate; for adenylyltransferase activity is the Cys246. Residues Cys304 and Cys307 each coordinate Zn(2+). One can recognise a Rhodanese domain in the interval 353-449 (QSQPHLLLDV…WTGSVDATFP (97 aa)). Cys408 serves as the catalytic Cysteine persulfide intermediate; for sulfurtransferase activity.

It in the N-terminal section; belongs to the HesA/MoeB/ThiF family. UBA4 subfamily. Requires Zn(2+) as cofactor.

The protein localises to the cytoplasm. It carries out the reaction [molybdopterin-synthase sulfur-carrier protein]-C-terminal Gly-Gly + ATP + H(+) = [molybdopterin-synthase sulfur-carrier protein]-C-terminal Gly-Gly-AMP + diphosphate. It catalyses the reaction [molybdopterin-synthase sulfur-carrier protein]-C-terminal Gly-Gly-AMP + S-sulfanyl-L-cysteinyl-[cysteine desulfurase] + AH2 = [molybdopterin-synthase sulfur-carrier protein]-C-terminal-Gly-aminoethanethioate + L-cysteinyl-[cysteine desulfurase] + A + AMP + 2 H(+). The protein operates within tRNA modification; 5-methoxycarbonylmethyl-2-thiouridine-tRNA biosynthesis. It participates in cofactor biosynthesis; molybdopterin biosynthesis. In terms of biological role, plays a central role in 2-thiolation of mcm(5)S(2)U at tRNA wobble positions of cytosolic tRNA(Lys), tRNA(Glu) and tRNA(Gln). Also essential during biosynthesis of the molybdenum cofactor. Acts by mediating the C-terminal thiocarboxylation of sulfur carriers URM1 and MOCS2A. Its N-terminus first activates URM1 and MOCS2A as acyl-adenylates (-COAMP), then the persulfide sulfur on the catalytic cysteine is transferred to URM1 and MOCS2A to form thiocarboxylation (-COSH) of their C-terminus. The reaction probably involves hydrogen sulfide that is generated from the persulfide intermediate and that acts as a nucleophile towards URM1 and MOCS2A. Subsequently, a transient disulfide bond is formed. Does not use thiosulfate as sulfur donor; NFS1 probably acting as a sulfur donor for thiocarboxylation reactions. The sequence is that of Adenylyltransferase and sulfurtransferase MOCS3-2 from Drosophila pseudoobscura pseudoobscura (Fruit fly).